We begin with the raw amino-acid sequence, 246 residues long: Phosducin (246 aa).

A compositionally biased stretch (acidic residues) spans 1-14 (MEEAASQSLEEDFE). Positions 1–70 (MEEAASQSLE…DKDSKERMSR (70 aa)) are disordered. A Phosducin domain is found at 1–246 (MEEAASQSLE…QTNTEDEDIE (246 aa)). Residues 58–69 (SRDDKDSKERMS) are compositionally biased toward basic and acidic residues. Ser73 bears the Phosphoserine; by PKA mark. The tract at residues 111–246 (YGFVYELETG…QTNTEDEDIE (136 aa)) is thioredoxin fold.

Belongs to the phosducin family. In terms of assembly, interacts with CRX. Forms a complex with the beta and gamma subunits of the GTP-binding protein, transducin. Light-induced changes in cyclic nucleotide levels modulate the phosphorylation of this protein by cAMP kinase.

It is found in the cytoplasm. The protein resides in the cytosol. Its subcellular location is the nucleus. The protein localises to the cell projection. It localises to the cilium. It is found in the photoreceptor outer segment. The protein resides in the photoreceptor inner segment. Its function is as follows. Inhibits the transcriptional activation activity of the cone-rod homeobox CRX. May participate in the regulation of visual phototransduction or in the integration of photoreceptor metabolism. This is Phosducin (Pdc) from Rattus norvegicus (Rat).